The chain runs to 800 residues: Small ribosomal subunit protein uS3c (800 aa).

The S3-like 1st part stretch occupies residues 1–118 (MGQKVHPSGF…LQVKKDILVK (118 aa)). The segment at 119–664 (LQKTRQYLTN…FLDCKFEELE (546 aa)) is intervening sequence (IVS). Positions 665-800 (RRKTMWVQNL…TKLVTESTGA (136 aa)) are S3-like 2nd part.

Belongs to the universal ribosomal protein uS3 family. In terms of assembly, part of the 30S ribosomal subunit.

The protein localises to the plastid. It is found in the chloroplast. The polypeptide is Small ribosomal subunit protein uS3c (rps3) (Chlamydomonas moewusii (Chlamydomonas eugametos)).